The sequence spans 406 residues: Tryptophan synthase beta chain (406 aa).

Lys-99 is subject to N6-(pyridoxal phosphate)lysine.

The protein belongs to the TrpB family. Tetramer of two alpha and two beta chains. Pyridoxal 5'-phosphate is required as a cofactor.

It catalyses the reaction (1S,2R)-1-C-(indol-3-yl)glycerol 3-phosphate + L-serine = D-glyceraldehyde 3-phosphate + L-tryptophan + H2O. The protein operates within amino-acid biosynthesis; L-tryptophan biosynthesis; L-tryptophan from chorismate: step 5/5. Functionally, the beta subunit is responsible for the synthesis of L-tryptophan from indole and L-serine. The chain is Tryptophan synthase beta chain (trpB) from Agrobacterium fabrum (strain C58 / ATCC 33970) (Agrobacterium tumefaciens (strain C58)).